A 288-amino-acid chain; its full sequence is Protein sprouty homolog 3 (288 aa).

The SPR domain maps to 154–260 (KCVPCTAARP…GYDSLRRPGC (107 aa)).

It belongs to the sprouty family. As to quaternary structure, interacts with TESK1. Interacts with USP11. Interacts with CAV1 (via C-terminus). Widely expressed; particularly in the fetal tissues. Expressed in the brain with expression the highest in Purkinje cells in the cerebellum (at protein level). Expressed in the myocardium of the heart.

Its subcellular location is the cytoplasm. Its function is as follows. Inhibits neurite branching, arbor length and neurite complexity. Inhibits EGF-mediated p42/44 ERK signaling. Negatively regulates the MAPK cascade, resulting in a reduction of extracellular matrix protein accumulation. May function as an antagonist of fibroblast growth factor (FGF) pathways and may negatively modulate respiratory organogenesis. The sequence is that of Protein sprouty homolog 3 from Homo sapiens (Human).